The sequence spans 260 residues: Homeobox protein CDX-1 (260 aa).

The homeobox DNA-binding region spans K149–N208. An interaction with DNA region spans residues Y152–Y173. The tract at residues R191–A202 is interaction with 5-mCpG DNA. The tract at residues E204–P260 is disordered. 2 stretches are compositionally biased toward low complexity: residues Q213–T223 and S240–L252.

It belongs to the Caudal homeobox family.

It localises to the nucleus. Functionally, plays a role in transcriptional regulation. Involved in activated KRAS-mediated transcriptional activation of PRKD1. Binds to the PRKD1 promoter. Could play a role in the terminal differentiation of the intestine. Binds preferentially to methylated DNA. This Gallus gallus (Chicken) protein is Homeobox protein CDX-1 (CDX1).